The sequence spans 500 residues: ATP synthase subunit alpha (500 aa).

169–176 (GDRQTGKT) is an ATP binding site.

Belongs to the ATPase alpha/beta chains family. F-type ATPases have 2 components, CF(1) - the catalytic core - and CF(0) - the membrane proton channel. CF(1) has five subunits: alpha(3), beta(3), gamma(1), delta(1), epsilon(1). CF(0) has three main subunits: a(1), b(2) and c(9-12). The alpha and beta chains form an alternating ring which encloses part of the gamma chain. CF(1) is attached to CF(0) by a central stalk formed by the gamma and epsilon chains, while a peripheral stalk is formed by the delta and b chains.

The protein resides in the cell membrane. It carries out the reaction ATP + H2O + 4 H(+)(in) = ADP + phosphate + 5 H(+)(out). Produces ATP from ADP in the presence of a proton gradient across the membrane. The alpha chain is a regulatory subunit. The sequence is that of ATP synthase subunit alpha from Lactococcus lactis subsp. cremoris (strain MG1363).